The primary structure comprises 238 residues: Uridylate kinase (238 aa).

12–15 contacts ATP; it reads KLSG. The interval 20-25 is involved in allosteric activation by GTP; it reads GQQGFG. A UMP-binding site is contributed by glycine 54. ATP contacts are provided by glycine 55 and arginine 59. Residues aspartate 74 and 135 to 142 each bind UMP; that span reads TGNPFFTT. Positions 162, 163, 168, and 171 each coordinate ATP.

It belongs to the UMP kinase family. In terms of assembly, homohexamer.

It localises to the cytoplasm. It catalyses the reaction UMP + ATP = UDP + ADP. Its pathway is pyrimidine metabolism; CTP biosynthesis via de novo pathway; UDP from UMP (UMPK route): step 1/1. Allosterically activated by GTP. Inhibited by UTP. Its function is as follows. Catalyzes the reversible phosphorylation of UMP to UDP. In Bradyrhizobium diazoefficiens (strain JCM 10833 / BCRC 13528 / IAM 13628 / NBRC 14792 / USDA 110), this protein is Uridylate kinase.